The chain runs to 227 residues: Uracil-DNA glycosylase (227 aa).

Asp65 functions as the Proton acceptor in the catalytic mechanism.

Belongs to the uracil-DNA glycosylase (UDG) superfamily. UNG family.

The protein resides in the cytoplasm. It catalyses the reaction Hydrolyzes single-stranded DNA or mismatched double-stranded DNA and polynucleotides, releasing free uracil.. Its function is as follows. Excises uracil residues from the DNA which can arise as a result of misincorporation of dUMP residues by DNA polymerase or due to deamination of cytosine. In Buchnera aphidicola subsp. Cinara cedri (strain Cc), this protein is Uracil-DNA glycosylase.